A 201-amino-acid chain; its full sequence is MAKRVTGPEIEKLIQLLAKVPGLGPRSARRAALHLVKKKEQLLGPLAEAMGEAHRKVKICSCCGNVDTIDPCTVCTDERRDRSVIIVVEDVADLWALERAAALNAAYHVLGGTLSPLDGIGPDDLNIKGLVDRVAKGGVRELVIAVNATVEGQTTAHYITDQLEGMEVKITRLAHGVPVGGELDYLDEGTLTAALRARTTI.

A C4-type zinc finger spans residues 60-75 (CSCCGNVDTIDPCTVC). Residues 83-178 (SVIIVVEDVA…KITRLAHGVP (96 aa)) enclose the Toprim domain.

The protein belongs to the RecR family.

Functionally, may play a role in DNA repair. It seems to be involved in an RecBC-independent recombinational process of DNA repair. It may act with RecF and RecO. This chain is Recombination protein RecR, found in Sinorhizobium fredii (strain NBRC 101917 / NGR234).